The chain runs to 502 residues: MTDSVVVEGYARLRDGKKWKTRWLVLRKPSPVADCLLLLVFKDKSDKVQGNKERLSATLEELCGLEVGPWYEGVAFTLAILCLTQTTLLGFDSKEALLAWDARLRYSLGEVHRFSVGVLPGTKLESGPATLHLCNNLLALARDVPPVIVGHWNLPDLRRYGPVPNGFVFEGGTRCGYWAGVFLLASVESEQISFLFDCIVRGISPTRGPFGLRPVLPDPSTSETSSEERLNHETLELEKRLSMLSHRSSTASYCPSAGGDDRSISGSSDTSDTSHSDCSVGSRLTIWTEPTSIQPENLGNAGAKAAAQSAEKPLPSGQGGGSQPPTKPPRQLQEIGRQSSSDSGIATGSHSSYSGSFSSYTGSLDSNTGEDYGSVFSLPPHLGQDVRPCTCLNVPGHEYQIPTSLRYLYDTPRSVLQEVGGDTKDNQPPAALGPTTEPAEGDKRSPGEGHLATADGDSPNEHFRSPSESKKSSEAPSGGHPGSCCFKTIVTICAVCGGFKVS.

Residues 4–109 (SVVVEGYARL…WDARLRYSLG (106 aa)) enclose the PH domain. The IRS-type PTB domain maps to 105-210 (RYSLGEVHRF…RGISPTRGPF (106 aa)). Disordered stretches follow at residues 210–232 (FGLR…RLNH), 249–279 (STAS…SDCS), 291–358 (TSIQ…GSFS), and 418–482 (EVGG…GHPG). 2 stretches are compositionally biased toward low complexity: residues 264–279 (ISGS…SDCS) and 301–316 (AGAK…PLPS). Positions 336-346 (GRQSSSDSGIA) are enriched in polar residues. Residues 347 to 358 (TGSHSSYSGSFS) show a composition bias toward low complexity. Residues 459–473 (PNEHFRSPSESKKSS) show a composition bias toward basic and acidic residues.

The protein localises to the cell membrane. It is found in the synapse. Its function is as follows. Probable muscle-intrinsic activator of MUSK that plays an essential role in neuromuscular synaptogenesis. Acts in aneural activation of MUSK and subsequent acetylcholine receptor (AchR) clustering in myotubes. The sequence is that of Protein Dok-7 (dok7) from Takifugu rubripes (Japanese pufferfish).